The following is a 95-amino-acid chain: Homeotic protein bicoid (95 aa).

Disordered stretches follow at residues 1-29 (NLEP…STGM) and 42-63 (GKPS…MMHD).

The protein belongs to the paired homeobox family. Bicoid subfamily.

The protein localises to the nucleus. Functionally, bicoid is polarity protein that provides positional cues for the development of head and thoracic segments. BCD regulates the expression of zygotic genes, possibly through its homeodomain, and inhibits the activity of other maternal gene products. This chain is Homeotic protein bicoid (bcd), found in Drosophila subobscura (Fruit fly).